Here is a 328-residue protein sequence, read N- to C-terminus: dTDP-glucose 4,6-dehydratase (328 aa).

NAD(+) is bound by residues 13–14 (FI), 37–40 (DALT), 63–64 (DI), 82–86 (LAAES), and Thr-101. Residue Ser-86 participates in substrate binding. Substrate is bound at residue Thr-126. The active-site Proton donor is Asp-127. Residues Glu-128 and Tyr-150 each act as proton acceptor in the active site. 150–154 (YSASK) provides a ligand contact to NAD(+). Position 179 (Asn-179) interacts with substrate. Asn-180 contributes to the NAD(+) binding site. Residues 189–190 (KL), 205–207 (PLY), Arg-214, Asn-249, and 272–276 (DRKGH) contribute to the substrate site.

Belongs to the NAD(P)-dependent epimerase/dehydratase family. dTDP-glucose dehydratase subfamily. In terms of assembly, homodimer. NAD(+) is required as a cofactor.

The enzyme catalyses dTDP-alpha-D-glucose = dTDP-4-dehydro-6-deoxy-alpha-D-glucose + H2O. It functions in the pathway antibiotic biosynthesis; streptomycin biosynthesis. In terms of biological role, involved in the biosynthesis of the streptose moiety of streptomycin. Catalyzes the dehydration of dTDP-D-glucose to form dTDP-6-deoxy-D-xylo-4-hexulose via a three-step process involving oxidation, dehydration and reduction. This chain is dTDP-glucose 4,6-dehydratase, found in Streptomyces griseus.